A 112-amino-acid chain; its full sequence is uncharacterized protein (112 aa).

A helical membrane pass occupies residues 82-104; that stretch reads IFFGFSIIASYFLKFHLLYVILL.

It is found in the membrane. This is an uncharacterized protein from Pasteurella multocida (strain Pm70).